A 99-amino-acid polypeptide reads, in one-letter code: Small ribosomal subunit protein eS24 (99 aa).

It belongs to the eukaryotic ribosomal protein eS24 family. In terms of assembly, may be present in 2 copies per 70S ribosome. Part of the 30S ribosomal subunit, where it binds 16S rRNA at its canonical site at the bse of the body, as well as a possible second 50S binding site near 23S rRNA helix 45.

The sequence is that of Small ribosomal subunit protein eS24 from Pyrococcus furiosus (strain ATCC 43587 / DSM 3638 / JCM 8422 / Vc1).